The primary structure comprises 121 residues: Small ribosomal subunit protein uS13 (121 aa).

Positions 91–121 (HRRGLPVRGQNSKNNARTRKGPRRTVANKKK) are disordered. A compositionally biased stretch (basic residues) spans 106 to 121 (ARTRKGPRRTVANKKK).

Belongs to the universal ribosomal protein uS13 family. Part of the 30S ribosomal subunit. Forms a loose heterodimer with protein S19. Forms two bridges to the 50S subunit in the 70S ribosome.

Located at the top of the head of the 30S subunit, it contacts several helices of the 16S rRNA. In the 70S ribosome it contacts the 23S rRNA (bridge B1a) and protein L5 of the 50S subunit (bridge B1b), connecting the 2 subunits; these bridges are implicated in subunit movement. Contacts the tRNAs in the A and P-sites. This chain is Small ribosomal subunit protein uS13, found in Bacillus cereus (strain G9842).